We begin with the raw amino-acid sequence, 332 residues long: UPF0194 membrane protein YbhG (332 aa).

An N-terminal signal peptide occupies residues 1–16 (MMKKPVVIGLAVVVLA). Residues 107–209 (NEEIAQAAAA…LNLQDSTLIA (103 aa)) adopt a coiled-coil conformation.

Belongs to the UPF0194 family.

It is found in the periplasm. In Escherichia coli (strain K12 / MC4100 / BW2952), this protein is UPF0194 membrane protein YbhG.